The primary structure comprises 636 residues: Chaperone protein HtpG (636 aa).

Residues methionine 1–arginine 329 are a; substrate-binding. The b stretch occupies residues glutamate 330 to lysine 550. The tract at residues leucine 551–leucine 636 is c.

The protein belongs to the heat shock protein 90 family. In terms of assembly, homodimer.

It localises to the cytoplasm. In terms of biological role, molecular chaperone. Has ATPase activity. This is Chaperone protein HtpG from Oleidesulfovibrio alaskensis (strain ATCC BAA-1058 / DSM 17464 / G20) (Desulfovibrio alaskensis).